Reading from the N-terminus, the 317-residue chain is Large ribosomal subunit protein uL10z (317 aa).

Belongs to the universal ribosomal protein uL10 family. P0 forms a pentameric complex by interaction with dimers of P1 and P2. In terms of processing, phosphorylated.

Functionally, ribosomal protein P0 is the functional equivalent of E.coli protein L10. The chain is Large ribosomal subunit protein uL10z (RPP0A) from Arabidopsis thaliana (Mouse-ear cress).